The following is a 470-amino-acid chain: Cell division protein FtsP (470 aa).

Positions methionine 1–alanine 27 form a signal peptide, tat-type signal. Residues tryptophan 68–glutamate 164 form the Plastocyanin-like domain.

It belongs to the FtsP family. Exported by the Tat system. The position of the signal peptide cleavage has been experimentally proven. Can also be exported by the Sec system.

It localises to the periplasm. In terms of biological role, cell division protein that is required for growth during stress conditions. May be involved in protecting or stabilizing the divisomal assembly under conditions of stress. The chain is Cell division protein FtsP from Escherichia coli (strain K12).